The following is a 661-amino-acid chain: Peroxisomal acyl-coenzyme A oxidase 1 (661 aa).

S26 carries the phosphoserine modification. K65 bears the N6-acetyllysine mark. K89 is subject to N6-succinyllysine. T139 is an FAD binding site. K159 carries the post-translational modification N6-succinyllysine. G178 provides a ligand contact to FAD. K216 bears the N6-acetyllysine mark. K241 is modified (N6-succinyllysine). N6-acetyllysine is present on residues K255, K267, and K272. At K349 the chain carries N6-succinyllysine. Residue E421 is the Proton acceptor of the active site. N6-acetyllysine; alternate occurs at positions 437 and 446. Residues K437 and K446 each carry the N6-succinyllysine; alternate modification. K500 carries the post-translational modification N6-acetyllysine. K512 is subject to N6-acetyllysine; alternate. Residue K512 is modified to N6-succinyllysine; alternate. At K542 the chain carries N6-succinyllysine. K637 is subject to N6-acetyllysine; alternate. K637 carries the post-translational modification N6-succinyllysine; alternate. K643 carries the N6-succinyllysine modification. The residue at position 649 (S649) is a Phosphoserine. K652 is modified (N6-acetyllysine). K655 is modified (N6-succinyllysine). The short motif at 659–661 (SKL) is the Microbody targeting signal element.

It belongs to the acyl-CoA oxidase family. Homodimer. Interacts with LONP2. The cofactor is FAD.

The protein resides in the peroxisome. It carries out the reaction a 2,3-saturated acyl-CoA + O2 = a (2E)-enoyl-CoA + H2O2. The enzyme catalyses hexadecanoyl-CoA + O2 = (2E)-hexadecenoyl-CoA + H2O2. It catalyses the reaction dodecanoyl-CoA + O2 = (2E)-dodecenoyl-CoA + H2O2. The catalysed reaction is octanoyl-CoA + O2 = (2E)-octenoyl-CoA + H2O2. It carries out the reaction decanoyl-CoA + O2 = (2E)-decenoyl-CoA + H2O2. The enzyme catalyses tetradecanoyl-CoA + O2 = (2E)-tetradecenoyl-CoA + H2O2. It catalyses the reaction hexadecanedioyl-CoA + O2 = (2E)-hexadecenedioyl-CoA + H2O2. The catalysed reaction is tetracosanoyl-CoA + O2 = (2E)-tetracosenoyl-CoA + H2O2. It carries out the reaction glutaryl-CoA + O2 = (2E)-glutaconyl-CoA + H2O2. The enzyme catalyses hexanoyl-CoA + O2 = (2E)-hexenoyl-CoA + H2O2. It catalyses the reaction octadecanoyl-CoA + O2 = (2E)-octadecenoyl-CoA + H2O2. The catalysed reaction is (5Z,8Z,11Z,14Z,17Z)-eicosapentaenoyl-CoA + O2 = (2E,5Z,8Z,11Z,14Z,17Z)-icosahexaenoyl-CoA + H2O2. It carries out the reaction (6Z,9Z,12Z,15Z,18Z,21Z)-tetracosahexaenoyl-CoA + O2 = (2E,6Z,9Z,12Z,15Z,18Z,21Z)-tetracosaheptaenoyl-CoA + H2O2. It functions in the pathway lipid metabolism; peroxisomal fatty acid beta-oxidation. Involved in the initial and rate-limiting step of peroxisomal beta-oxidation of straight-chain saturated and unsaturated very-long-chain fatty acids. Catalyzes the desaturation of fatty acyl-CoAs such as palmitoyl-CoA (hexadecanoyl-CoA) to 2-trans-enoyl-CoAs ((2E)-enoyl-CoAs) such as (2E)-hexadecenoyl-CoA, and donates electrons directly to molecular oxygen (O(2)), thereby producing hydrogen peroxide (H(2)O(2)). In Cavia porcellus (Guinea pig), this protein is Peroxisomal acyl-coenzyme A oxidase 1.